Consider the following 347-residue polypeptide: Malate dehydrogenase, mitochondrial (347 aa).

The N-terminal 27 residues, 1–27 (MKASILRSVRSAVSRSSSSNRLLSRSF), are a transit peptide targeting the mitochondrion. NAD(+) is bound by residues 41–47 (GAAGGIG) and Asp67. Substrate is bound by residues Arg114 and Arg120. NAD(+) is bound by residues Asn127 and 150 to 152 (ISN). Asn152 and Arg186 together coordinate substrate. The active-site Proton acceptor is His210. Met261 is an NAD(+) binding site.

It belongs to the LDH/MDH superfamily. MDH type 1 family. In terms of assembly, homodimer.

It is found in the mitochondrion matrix. The enzyme catalyses (S)-malate + NAD(+) = oxaloacetate + NADH + H(+). The chain is Malate dehydrogenase, mitochondrial (MMDH) from Citrullus lanatus (Watermelon).